An 81-amino-acid polypeptide reads, in one-letter code: Protein GPR15LG (81 aa).

Positions 1-24 (MRFLALTSLLCILLLCLSFFSAEG) are cleaved as a signal peptide. 2 disulfide bridges follow: cysteine 40-cysteine 63 and cysteine 41-cysteine 60.

In terms of assembly, interacts with SUSD2; the interaction is direct.

The protein localises to the secreted. Its function is as follows. Highly cationic protein that has multiple functions. Acts as a chemotactic factor that mediates lymphocytes recruitment to epithelia through binding and activation of the G-protein coupled receptor GPR15. May be a tumor suppressor; together with SUSD2 has a growth inhibitory effect on colon cancer cells which includes G1 cell cycle arrest. May regulate keratinocyte proliferation. In addition, through activation of Mas-related G protein-coupled receptors (MRGPRs) contributes to pruritogenesis by activating itch-selective sensory neurons and mast cells degranulation. Has antimicrobial activity against Gram-positive bacteria, including Staphylococcus aureus and Actinomyces spec., and Mycoplasma hominis and lentivirus. The polypeptide is Protein GPR15LG (GPR15LG) (Sus scrofa (Pig)).